The following is a 61-amino-acid chain: UPF0434 protein MS0934 (61 aa).

Belongs to the UPF0434 family.

The chain is UPF0434 protein MS0934 from Mannheimia succiniciproducens (strain KCTC 0769BP / MBEL55E).